The following is a 341-amino-acid chain: 4-(gamma-L-glutamylamino)butanoyl-[BtrI acyl-carrier protein] monooxygenase BtrO (341 aa).

Belongs to the bacterial luciferase oxidoreductase family.

The catalysed reaction is 4-(gamma-L-glutamylamino)butanoyl-[BtrI ACP] + FMNH2 + O2 = 4-(gamma-L-glutamylamino)-(2S)-2-hydroxybutanoyl-[BtrI ACP] + FMN + H2O + H(+). It functions in the pathway antibiotic biosynthesis; butirosin biosynthesis. Its function is as follows. Monooxygenase component of a two-component system involved in the biosynthesis of the side chain of the aminoglycoside antibiotics in the biosynthetic pathway of butirosin. Together with BtrV, mediates hydroxylation of gamma-L-Glu-GABA-S-BtrI. Not able to hydroxylate free substrates, activation by the acyl-carrier protein is mandatory. Octanoyl-S-[BtrI acyl-carrier protein] is also accepted as substrate. The chain is 4-(gamma-L-glutamylamino)butanoyl-[BtrI acyl-carrier protein] monooxygenase BtrO (btrO) from Niallia circulans (Bacillus circulans).